A 321-amino-acid chain; its full sequence is Cytochrome f (321 aa).

An N-terminal signal peptide occupies residues 1-35; sequence MQNRNKNNWMKKWVIRSISILIILNIIAWPSISYA. Heme contacts are provided by tyrosine 36, cysteine 56, cysteine 59, and histidine 60. The chain crosses the membrane as a helical span at residues 287-306; it reads IQGLLLFFVSVIMAQILLVL.

The protein belongs to the cytochrome f family. As to quaternary structure, the 4 large subunits of the cytochrome b6-f complex are cytochrome b6, subunit IV (17 kDa polypeptide, petD), cytochrome f and the Rieske protein, while the 4 small subunits are PetG, PetL, PetM and PetN. The complex functions as a dimer. Requires heme as cofactor.

It is found in the plastid. The protein resides in the chloroplast thylakoid membrane. Component of the cytochrome b6-f complex, which mediates electron transfer between photosystem II (PSII) and photosystem I (PSI), cyclic electron flow around PSI, and state transitions. This is Cytochrome f from Psilotum nudum (Whisk fern).